The primary structure comprises 914 residues: Exoglucanase-2 (914 aa).

The first 33 residues, 1 to 33, serve as a signal peptide directing secretion; the sequence is MKRRLMKGISLLTLVFLIGIMLQLSLKSELTAY. One can recognise a CBM3 domain in the interval 763-914; sequence VEGVLIIQSF…SGNLVYGIEP (152 aa).

Belongs to the glycosyl hydrolase 48 (cellulase L) family.

It carries out the reaction Hydrolysis of (1-&gt;4)-beta-D-glucosidic linkages in cellulose and cellotetraose, releasing cellobiose from the non-reducing ends of the chains.. In Thermoclostridium stercorarium (strain ATCC 35414 / DSM 8532 / NCIMB 11754) (Clostridium stercorarium), this protein is Exoglucanase-2 (celY).